The following is a 240-amino-acid chain: Large ribosomal subunit protein uL2 (240 aa).

The tract at residues 199-240 is disordered; the sequence is DHPFGGGGRQHPGRPKSVSRDAAPGRKVGDIASKRTGRGGNE. Positions 221-231 are enriched in basic and acidic residues; that stretch reads APGRKVGDIAS.

Belongs to the universal ribosomal protein uL2 family. As to quaternary structure, part of the 50S ribosomal subunit. Forms a bridge to the 30S subunit in the 70S ribosome.

Its function is as follows. One of the primary rRNA binding proteins. Required for association of the 30S and 50S subunits to form the 70S ribosome, for tRNA binding and peptide bond formation. It has been suggested to have peptidyltransferase activity; this is somewhat controversial. Makes several contacts with the 16S rRNA in the 70S ribosome. The chain is Large ribosomal subunit protein uL2 from Halobacterium salinarum (strain ATCC 29341 / DSM 671 / R1).